The following is a 399-amino-acid chain: Chorismate synthase (399 aa).

NADP(+)-binding residues include arginine 40 and arginine 46. FMN-binding positions include 135–137 (RAS), 256–257 (QA), glycine 301, 316–320 (KPIAT), and arginine 342.

The protein belongs to the chorismate synthase family. In terms of assembly, homotetramer. The cofactor is FMNH2.

The catalysed reaction is 5-O-(1-carboxyvinyl)-3-phosphoshikimate = chorismate + phosphate. The protein operates within metabolic intermediate biosynthesis; chorismate biosynthesis; chorismate from D-erythrose 4-phosphate and phosphoenolpyruvate: step 7/7. Functionally, catalyzes the anti-1,4-elimination of the C-3 phosphate and the C-6 proR hydrogen from 5-enolpyruvylshikimate-3-phosphate (EPSP) to yield chorismate, which is the branch point compound that serves as the starting substrate for the three terminal pathways of aromatic amino acid biosynthesis. This reaction introduces a second double bond into the aromatic ring system. The polypeptide is Chorismate synthase (Pseudarthrobacter chlorophenolicus (strain ATCC 700700 / DSM 12829 / CIP 107037 / JCM 12360 / KCTC 9906 / NCIMB 13794 / A6) (Arthrobacter chlorophenolicus)).